An 89-amino-acid chain; its full sequence is Small ribosomal subunit protein uS15 (89 aa).

The protein belongs to the universal ribosomal protein uS15 family. Part of the 30S ribosomal subunit. Forms a bridge to the 50S subunit in the 70S ribosome, contacting the 23S rRNA.

In terms of biological role, one of the primary rRNA binding proteins, it binds directly to 16S rRNA where it helps nucleate assembly of the platform of the 30S subunit by binding and bridging several RNA helices of the 16S rRNA. Forms an intersubunit bridge (bridge B4) with the 23S rRNA of the 50S subunit in the ribosome. The protein is Small ribosomal subunit protein uS15 of Alcanivorax borkumensis (strain ATCC 700651 / DSM 11573 / NCIMB 13689 / SK2).